The sequence spans 144 residues: Probable nucleoside diphosphate kinase 5 (144 aa).

Residues lysine 3, phenylalanine 51, arginine 79, threonine 85, arginine 99, and asparagine 109 each contribute to the ATP site. Residue histidine 112 is the Pros-phosphohistidine intermediate of the active site.

This sequence belongs to the NDK family.

It catalyses the reaction a 2'-deoxyribonucleoside 5'-diphosphate + ATP = a 2'-deoxyribonucleoside 5'-triphosphate + ADP. The enzyme catalyses a ribonucleoside 5'-diphosphate + ATP = a ribonucleoside 5'-triphosphate + ADP. Involved in the synthesis of nucleoside triphosphates other than ATP. The ATP gamma phosphate is transferred to the NDP beta phosphate via a ping-pong mechanism, using a phosphorylated active-site intermediate. The protein is Probable nucleoside diphosphate kinase 5 of Arabidopsis thaliana (Mouse-ear cress).